A 206-amino-acid chain; its full sequence is Inosine triphosphate pyrophosphatase (206 aa).

Residue 21-26 (TGNAKK) coordinates ITP. Glutamate 49 contacts Mg(2+). ITP contacts are provided by residues lysine 61, 77-78 (DT), lysine 94, 153-156 (FGWD), lysine 176, and 181-182 (HR).

It belongs to the HAM1 NTPase family. In terms of assembly, homodimer. Requires Mg(2+) as cofactor. It depends on Mn(2+) as a cofactor.

Its subcellular location is the cytoplasm. The enzyme catalyses ITP + H2O = IMP + diphosphate + H(+). It catalyses the reaction dITP + H2O = dIMP + diphosphate + H(+). The catalysed reaction is XTP + H2O = XMP + diphosphate + H(+). Its function is as follows. Pyrophosphatase that hydrolyzes non-canonical purine nucleotides such as inosine triphosphate (ITP), deoxyinosine triphosphate (dITP) or xanthosine 5'-triphosphate (XTP) to their respective monophosphate derivatives. The enzyme does not distinguish between the deoxy- and ribose forms. Probably excludes non-canonical purines from RNA and DNA precursor pools, thus preventing their incorporation into RNA and DNA and avoiding chromosomal lesions. This is Inosine triphosphate pyrophosphatase from Vitis vinifera (Grape).